We begin with the raw amino-acid sequence, 398 residues long: Lysophospholipid transporter LplT (398 aa).

Helical transmembrane passes span 19-39 (VIAAQFLSAFGDNALLFATLA), 53-73 (ILQMVFVGAYILFAPFVGQVA), 91-111 (LGAASICFGFNPFVGYTLVGI), 139-159 (LMEASTIAAILLGSVAGGVLA), 164-184 (IAALVACALAYAGAVVANLFI), 227-247 (LFWGAGVTLRFLLVLWVPVAL), 257-277 (YLNAMVAIGIVVGAGAAAKLV), 281-301 (TVARCMPAGILIGVVVLIFSL), 304-324 (ALLPAYALLTLIGVLGGFFVV), 350-370 (GENSAMLLMLGLYSLAVLVGI), and 372-392 (VVAIGIGFGGLFALAIAALWI).

This sequence belongs to the major facilitator superfamily. LplT (TC 2.A.1.42) family.

The protein resides in the cell inner membrane. Functionally, catalyzes the facilitated diffusion of 2-acyl-glycero-3-phosphoethanolamine (2-acyl-GPE) into the cell. The polypeptide is Lysophospholipid transporter LplT (Citrobacter koseri (strain ATCC BAA-895 / CDC 4225-83 / SGSC4696)).